Reading from the N-terminus, the 1092-residue chain is Isoleucine--tRNA ligase (1092 aa).

The 'HIGH' region motif lies at 53–63; that stretch reads PFANGLPHYGH. Positions 613–617 match the 'KMSKS' region motif; the sequence is KLSKR. Residue Lys616 coordinates ATP.

It belongs to the class-I aminoacyl-tRNA synthetase family. IleS type 2 subfamily. Monomer. Requires Zn(2+) as cofactor.

The protein localises to the cytoplasm. The enzyme catalyses tRNA(Ile) + L-isoleucine + ATP = L-isoleucyl-tRNA(Ile) + AMP + diphosphate. In terms of biological role, catalyzes the attachment of isoleucine to tRNA(Ile). As IleRS can inadvertently accommodate and process structurally similar amino acids such as valine, to avoid such errors it has two additional distinct tRNA(Ile)-dependent editing activities. One activity is designated as 'pretransfer' editing and involves the hydrolysis of activated Val-AMP. The other activity is designated 'posttransfer' editing and involves deacylation of mischarged Val-tRNA(Ile). In Rickettsia peacockii (strain Rustic), this protein is Isoleucine--tRNA ligase.